A 387-amino-acid polypeptide reads, in one-letter code: Methyltransferase phomM' (387 aa).

Residues 98 to 223 form a methyltransferase domain region; that stretch reads PHRPKDLHIL…QSVADLFTTL (126 aa).

The protein belongs to the class I-like SAM-binding methyltransferase superfamily. Erg6/SMT family.

It functions in the pathway mycotoxin biosynthesis. In terms of biological role, methyltransferase; part of the gene cluster that mediates the biosynthesis of the phomopsins, a group of hexapeptide mycotoxins which infects lupins and causes lupinosis disease in livestock. Within the pathway, phomM' acts as an S-adenosylmethionine-dependent alpha-N-methyltransferase that catalyzes two successive N-methylation reactions, converting N-desmethyl-phomopsin A to phomopsin A and phomopsin A further to an N,N-dimethylated congener called phomopsin E. The pathway starts with the processing of the precursor phomA' by several endopeptidases including kexin proteases as well as the cluster-specific S41 family peptidase phomP1 and the oligopeptidase phomG' to produce 10 identical copies of the hexapeptide Tyr-Val-Ile-Pro-Ile-Asp. After being excised from the precursor peptide, the core peptides are cyclized and modified post-translationally by enzymes encoded within the gene cluster. The timing and order of proteolysis of the phomA' precursor and PTMs are still unknown. Two tyrosinase-like enzymes, phomQ1' and phomQ2, catalyze the chlorination and hydroxylation of Tyr, respectively. PhomYb, is proposed to be involved in the construction of the macrocyclic structure. The other 4 ustYa family proteins may be involved in PTMs that generate the unique structure of phomopsin A. PhomYa' is required for the hydroxylation of C-beta of Tyr. PhomYc', phomYd', and phomYe are responsible for the biosynthesis of 2,3-dehydroisoleucine (dIle), 2,3-dehydroaspartic acid (dAsp), and 3,4-dehydroproline (dPro), respectively. While dIle formation by phomYc' is indispensable for the installation of dAsp by phomYd', the order of the other PTMs have not been elucidated yet. Most of the biosynthetic enzymes likely have broad substrate specificity, and thus, there might be a metabolic grid from a precursor to phomopsin A. The enzyme(s) responsible for the biosynthesis of 3,4-dehydrovaline (dVal) have also not been identified yet. Finally, phomM' acts as an S-adenosylmethionine-dependent alpha-N-methyltransferase that catalyzes two successive N-methylation reactions, converting N-desmethyl-phomopsin A to phomopsin A and phomopsin A further to an N,N-dimethylated congener called phomopsin E. The protein is Methyltransferase phomM' of Diaporthe leptostromiformis (Lupinosis disease fungus).